A 66-amino-acid polypeptide reads, in one-letter code: Large ribosomal subunit protein uL29 (66 aa).

This sequence belongs to the universal ribosomal protein uL29 family.

In Bacillus anthracis (strain CDC 684 / NRRL 3495), this protein is Large ribosomal subunit protein uL29.